The primary structure comprises 375 residues: Succinyl-diaminopimelate desuccinylase (375 aa).

Position 66 (histidine 66) interacts with Zn(2+). Residue aspartate 68 is part of the active site. Aspartate 99 is a binding site for Zn(2+). Glutamate 133 (proton acceptor) is an active-site residue. Residues glutamate 134, glutamate 162, and histidine 348 each contribute to the Zn(2+) site.

Belongs to the peptidase M20A family. DapE subfamily. In terms of assembly, homodimer. The cofactor is Zn(2+). Requires Co(2+) as cofactor.

It carries out the reaction N-succinyl-(2S,6S)-2,6-diaminopimelate + H2O = (2S,6S)-2,6-diaminopimelate + succinate. The protein operates within amino-acid biosynthesis; L-lysine biosynthesis via DAP pathway; LL-2,6-diaminopimelate from (S)-tetrahydrodipicolinate (succinylase route): step 3/3. In terms of biological role, catalyzes the hydrolysis of N-succinyl-L,L-diaminopimelic acid (SDAP), forming succinate and LL-2,6-diaminopimelate (DAP), an intermediate involved in the bacterial biosynthesis of lysine and meso-diaminopimelic acid, an essential component of bacterial cell walls. The sequence is that of Succinyl-diaminopimelate desuccinylase from Photorhabdus laumondii subsp. laumondii (strain DSM 15139 / CIP 105565 / TT01) (Photorhabdus luminescens subsp. laumondii).